The sequence spans 130 residues: Sulfurtransferase TusD (130 aa).

The active-site Cysteine persulfide intermediate is the cysteine 80.

Belongs to the DsrE/TusD family. In terms of assembly, heterohexamer, formed by a dimer of trimers. The hexameric TusBCD complex contains 2 copies each of TusB, TusC and TusD. The TusBCD complex interacts with TusE.

The protein resides in the cytoplasm. Part of a sulfur-relay system required for 2-thiolation of 5-methylaminomethyl-2-thiouridine (mnm(5)s(2)U) at tRNA wobble positions. Accepts sulfur from TusA and transfers it in turn to TusE. The sequence is that of Sulfurtransferase TusD from Sodalis glossinidius (strain morsitans).